A 158-amino-acid chain; its full sequence is NAD(P)H-quinone oxidoreductase subunit N (158 aa).

This sequence belongs to the complex I NdhN subunit family. As to quaternary structure, NDH-1 can be composed of about 15 different subunits; different subcomplexes with different compositions have been identified which probably have different functions.

The protein localises to the cellular thylakoid membrane. It carries out the reaction a plastoquinone + NADH + (n+1) H(+)(in) = a plastoquinol + NAD(+) + n H(+)(out). The catalysed reaction is a plastoquinone + NADPH + (n+1) H(+)(in) = a plastoquinol + NADP(+) + n H(+)(out). Functionally, NDH-1 shuttles electrons from an unknown electron donor, via FMN and iron-sulfur (Fe-S) centers, to quinones in the respiratory and/or the photosynthetic chain. The immediate electron acceptor for the enzyme in this species is believed to be plastoquinone. Couples the redox reaction to proton translocation, and thus conserves the redox energy in a proton gradient. Cyanobacterial NDH-1 also plays a role in inorganic carbon-concentration. The polypeptide is NAD(P)H-quinone oxidoreductase subunit N (Gloeothece citriformis (strain PCC 7424) (Cyanothece sp. (strain PCC 7424))).